Reading from the N-terminus, the 822-residue chain is Stemar-13-ene synthase (822 aa).

Positions 1–10 are enriched in polar residues; the sequence is MMLLSSSYSG. Positions 1–29 are disordered; sequence MMLLSSSYSGGQFPGVSPLGTRPKRSTTV. Asp553, Asp557, Asn698, Thr702, and Glu706 together coordinate Mg(2+). The DDXXD motif signature appears at 553-557; that stretch reads DDLFD.

Belongs to the terpene synthase family. The cofactor is Mg(2+).

The catalysed reaction is 9alpha-copalyl diphosphate = stemar-13-ene + diphosphate. Functionally, catalyzes the conversion of syn-copalyl diphosphate to the phytoalexin precursor stemarene. This Oryza sativa subsp. japonica (Rice) protein is Stemar-13-ene synthase (KSL8).